Here is a 229-residue protein sequence, read N- to C-terminus: Coiled-coil domain-containing protein 134 (229 aa).

Residues 1 to 22 (MDLLQFLAFLFVLLLSGMGATG) form the signal peptide. Residue N148 is a short sequence motif, prevents secretion from ER. Residue N148 is glycosylated (N-linked (GlcNAc...) asparagine). Residues 193–229 (TDPFQKALREEEKRRKKEEKRKEIRKGPRISRSQSEL) form a disordered region. Residues 196 to 218 (FQKALREEEKRRKKEEKRKEIRK) adopt a coiled-coil conformation. The Nuclear localization signal signature appears at 206 to 213 (RRKKEEKR).

This sequence belongs to the CCDC134 family. In terms of assembly, interacts with TADA2A. Associates with the PCAF complex via TADA2A binding. In terms of processing, O-glycosylated, with additional sialic acid modifications. Expressed in cervical gland, cervical squamous epithelium, endometrium, stomach, kidney distal convoluted tubule, spermatogenic cells in testis, mammary gland, liver and striated muscle (at protein level). Also detected in placenta. Highest expression in testis relative to other tissues. Detected in T cells and dendritic cells; highly expressed in activated CD8(+) T cells, and also expressed at lower levels in CD4(+) T cells.

Its subcellular location is the endoplasmic reticulum lumen. It is found in the secreted. It localises to the cytoplasm. The protein localises to the nucleus. Molecular adapter required to prevent protein hyperglycosylation of HSP90B1: during translation, associates with nascent HSP90B1 and the STT3A catalytic component of the OST-A complex and tethers them to a specialized translocon that forms a microenvironment for HSP90B1 folding. In the CCDC134-containing translocon, STT3A associates with the SRT pseudosubstrate motif of HSP90B1, preventing access to facultative glycosylation sites until folding is completed, preventing hyperglycosylation and subsequent degradation of HSP90B1. In extracellular secreted form, promotes proliferation and activation of CD8(+) T-cells, suggesting a cytokine-like function. May inhibit ERK and JNK signaling activity. May suppress cell migration and invasion activity, via its effects on ERK and JNK signaling. May also localize in the nucleus: enhances stability of the PCAF histone acetyltransferase (HAT) complex member TADA2A and thus promotes PCAF-mediated histone acetyltransferase activity. Has a critical role in the regulation of osteogenesis and bone development. This is Coiled-coil domain-containing protein 134 from Homo sapiens (Human).